The primary structure comprises 270 residues: dTDP-6-deoxy-L-talose 4-dehydrogenase (NAD(+)) (270 aa).

Residues Tyr-11–Ile-12, Asp-50–Ile-51, Leu-72–Ala-76, Asn-87, Thr-112, Tyr-135, and Lys-139 contribute to the NAD(+) site. Residues Thr-112 and Tyr-135 each contribute to the substrate site. Catalysis depends on Tyr-135, which acts as the Proton acceptor.

This sequence belongs to the NAD(P)-dependent epimerase/dehydratase family.

The enzyme catalyses dTDP-6-deoxy-beta-L-talose + NAD(+) = dTDP-4-dehydro-beta-L-rhamnose + NADH + H(+). It functions in the pathway bacterial outer membrane biogenesis; LPS O-antigen biosynthesis. In terms of biological role, catalyzes the reduction of dTDP-6-deoxy-L-lyxo-4-hexulose to dTDP-6-deoxy-L-talose. This chain is dTDP-6-deoxy-L-talose 4-dehydrogenase (NAD(+)) (tll), found in Aggregatibacter actinomycetemcomitans (Actinobacillus actinomycetemcomitans).